Here is a 200-residue protein sequence, read N- to C-terminus: Glycosyl hydrolase family 19 domain-containing protein HI_1415 (200 aa).

It belongs to the glycosyl hydrolase 19 family.

The polypeptide is Glycosyl hydrolase family 19 domain-containing protein HI_1415 (Haemophilus influenzae (strain ATCC 51907 / DSM 11121 / KW20 / Rd)).